The primary structure comprises 95 residues: MITIKAEVRNDQGKGASRRLRAANKFPAIIYGGSEAAIAIELDHDTTKNLELKPGFYDNTGLTLVINGKETKVKVQAVQRHAFKPKLTHIDFVRI.

The protein belongs to the bacterial ribosomal protein bL25 family. Part of the 50S ribosomal subunit; part of the 5S rRNA/L5/L18/L25 subcomplex. Contacts the 5S rRNA. Binds to the 5S rRNA independently of L5 and L18.

In terms of biological role, this is one of the proteins that binds to the 5S RNA in the ribosome where it forms part of the central protuberance. The polypeptide is Large ribosomal subunit protein bL25 (Yersinia enterocolitica serotype O:8 / biotype 1B (strain NCTC 13174 / 8081)).